The sequence spans 308 residues: Probable manganese-dependent inorganic pyrophosphatase (308 aa).

Mn(2+) contacts are provided by His-9, Asp-13, Asp-15, Asp-75, His-97, and Asp-149.

Belongs to the PPase class C family. Requires Mn(2+) as cofactor.

It localises to the cytoplasm. It catalyses the reaction diphosphate + H2O = 2 phosphate + H(+). The chain is Probable manganese-dependent inorganic pyrophosphatase from Listeria welshimeri serovar 6b (strain ATCC 35897 / DSM 20650 / CCUG 15529 / CIP 8149 / NCTC 11857 / SLCC 5334 / V8).